Reading from the N-terminus, the 207-residue chain is MMIVIDYDAGNTANVLRALAQVRVEARLSADPQEILAADGLILPGVGAFPTAMQELERRGLVSVIQQAVADGKPLLGICLGMQLLLESGLENGQSSGLGLIPGVCRRIPDQAGLPVPHMGWNDLQMQQSSALTASLEGQSVYFVHSYYTDVPEEYLDVTADYGLPIPAMIHRGSVFGCQFHPEKSGAVGLGILEKFKEYVYENTARY.

The Glutamine amidotransferase type-1 domain maps to 1 to 206 (MMIVIDYDAG…KEYVYENTAR (206 aa)). C79 functions as the Nucleophile in the catalytic mechanism. Active-site residues include H181 and E183.

Heterodimer of HisH and HisF.

It localises to the cytoplasm. The catalysed reaction is 5-[(5-phospho-1-deoxy-D-ribulos-1-ylimino)methylamino]-1-(5-phospho-beta-D-ribosyl)imidazole-4-carboxamide + L-glutamine = D-erythro-1-(imidazol-4-yl)glycerol 3-phosphate + 5-amino-1-(5-phospho-beta-D-ribosyl)imidazole-4-carboxamide + L-glutamate + H(+). It catalyses the reaction L-glutamine + H2O = L-glutamate + NH4(+). Its pathway is amino-acid biosynthesis; L-histidine biosynthesis; L-histidine from 5-phospho-alpha-D-ribose 1-diphosphate: step 5/9. Its function is as follows. IGPS catalyzes the conversion of PRFAR and glutamine to IGP, AICAR and glutamate. The HisH subunit catalyzes the hydrolysis of glutamine to glutamate and ammonia as part of the synthesis of IGP and AICAR. The resulting ammonia molecule is channeled to the active site of HisF. This Streptococcus sanguinis (strain SK36) protein is Imidazole glycerol phosphate synthase subunit HisH.